We begin with the raw amino-acid sequence, 763 residues long: 5-methyltetrahydropteroyltriglutamate--homocysteine methyltransferase (763 aa).

5-methyltetrahydropteroyltri-L-glutamate-binding positions include 16–19 (RELK) and lysine 117. Residues 438-440 (IGS) and glutamate 491 contribute to the L-homocysteine site. Residues 438 to 440 (IGS) and glutamate 491 each bind L-methionine. 5-methyltetrahydropteroyltri-L-glutamate is bound by residues 522–523 (RC) and tryptophan 568. Aspartate 606 is an L-homocysteine binding site. Aspartate 606 contacts L-methionine. 5-methyltetrahydropteroyltri-L-glutamate is bound at residue glutamate 612. 3 residues coordinate Zn(2+): histidine 648, cysteine 650, and glutamate 672. Histidine 701 acts as the Proton donor in catalysis. Cysteine 733 provides a ligand contact to Zn(2+).

It belongs to the vitamin-B12 independent methionine synthase family. Zn(2+) is required as a cofactor.

The catalysed reaction is 5-methyltetrahydropteroyltri-L-glutamate + L-homocysteine = tetrahydropteroyltri-L-glutamate + L-methionine. It functions in the pathway amino-acid biosynthesis; L-methionine biosynthesis via de novo pathway; L-methionine from L-homocysteine (MetE route): step 1/1. Catalyzes the transfer of a methyl group from 5-methyltetrahydrofolate to homocysteine resulting in methionine formation. This chain is 5-methyltetrahydropteroyltriglutamate--homocysteine methyltransferase, found in Pseudomonas paraeruginosa (strain DSM 24068 / PA7) (Pseudomonas aeruginosa (strain PA7)).